Reading from the N-terminus, the 115-residue chain is Large ribosomal subunit protein bL19 (115 aa).

Belongs to the bacterial ribosomal protein bL19 family.

This protein is located at the 30S-50S ribosomal subunit interface and may play a role in the structure and function of the aminoacyl-tRNA binding site. The protein is Large ribosomal subunit protein bL19 of Shouchella clausii (strain KSM-K16) (Alkalihalobacillus clausii).